A 138-amino-acid polypeptide reads, in one-letter code: Basic phospholipase A2 RV-4 (138 aa).

Positions 1-16 are cleaved as a signal peptide; that stretch reads MRTLWIVAVCLIGVEG. 7 disulfide bridges follow: cysteine 42–cysteine 131, cysteine 44–cysteine 60, cysteine 59–cysteine 111, cysteine 65–cysteine 138, cysteine 66–cysteine 104, cysteine 73–cysteine 97, and cysteine 91–cysteine 102. Ca(2+) is bound by residues tyrosine 43, glycine 45, and glycine 47. The active site involves histidine 63. Aspartate 64 serves as a coordination point for Ca(2+). Aspartate 105 is a catalytic residue.

The protein belongs to the phospholipase A2 family. Group II subfamily. D49 sub-subfamily. Heterodimer of a weakly toxic basic protein having phospholipase A2 activity (RV-4) and a non-toxic acidic protein which inhibits its enzymatic activity but potentiates its lethal potency and neurotoxicity (RV-7). Ca(2+) serves as cofactor. As to expression, expressed by the venom gland.

Its subcellular location is the secreted. The catalysed reaction is a 1,2-diacyl-sn-glycero-3-phosphocholine + H2O = a 1-acyl-sn-glycero-3-phosphocholine + a fatty acid + H(+). Its function is as follows. Heterodimer RV-4/RV-7: acts as a presynaptic neurotoxin. Functionally, monomer: snake venom phospholipase A2 (PLA2) that acts as a presynaptic neurotoxin. PLA2 catalyzes the calcium-dependent hydrolysis of the 2-acyl groups in 3-sn-phosphoglycerides. The chain is Basic phospholipase A2 RV-4 from Daboia siamensis (Eastern Russel's viper).